Reading from the N-terminus, the 388-residue chain is Alanine racemase (388 aa).

Lys-44 acts as the Proton acceptor; specific for D-alanine in catalysis. Lys-44 bears the N6-(pyridoxal phosphate)lysine mark. A substrate-binding site is contributed by Arg-142. Tyr-273 functions as the Proton acceptor; specific for L-alanine in the catalytic mechanism. Met-321 provides a ligand contact to substrate.

The protein belongs to the alanine racemase family. Pyridoxal 5'-phosphate is required as a cofactor.

The catalysed reaction is L-alanine = D-alanine. The protein operates within amino-acid biosynthesis; D-alanine biosynthesis; D-alanine from L-alanine: step 1/1. Its function is as follows. Catalyzes the interconversion of L-alanine and D-alanine. May also act on other amino acids. The chain is Alanine racemase (alr) from Mycobacterium avium (strain 104).